Reading from the N-terminus, the 171-residue chain is Lipoprotein signal peptidase (171 aa).

Helical transmembrane passes span 15-35 (WLWL…IVMD), 47-67 (VLPF…SFLS), 72-92 (WQRW…AYWM), and 107-127 (ALII…GFVV). Active-site residues include Asp-128 and Asp-146. The chain crosses the membrane as a helical span at residues 141–161 (AFNLADSTICIGAAMIILDGF).

The protein belongs to the peptidase A8 family.

It localises to the cell inner membrane. The enzyme catalyses Release of signal peptides from bacterial membrane prolipoproteins. Hydrolyzes -Xaa-Yaa-Zaa-|-(S,diacylglyceryl)Cys-, in which Xaa is hydrophobic (preferably Leu), and Yaa (Ala or Ser) and Zaa (Gly or Ala) have small, neutral side chains.. The protein operates within protein modification; lipoprotein biosynthesis (signal peptide cleavage). Functionally, this protein specifically catalyzes the removal of signal peptides from prolipoproteins. The polypeptide is Lipoprotein signal peptidase (Vibrio cholerae serotype O1 (strain ATCC 39315 / El Tor Inaba N16961)).